The primary structure comprises 533 residues: DEAD-box ATP-dependent RNA helicase CshA (533 aa).

Residues 2–30 carry the Q motif motif; the sequence is TTFRELGLSDSLLQSVESMGFEEATPIQA. The Helicase ATP-binding domain maps to 33–203; that stretch reads IPHALQGKDI…ERFMTEPQHI (171 aa). An ATP-binding site is contributed by 46–53; that stretch reads AQTGTGKT. A DEAD box motif is present at residues 151–154; sequence DEAD. Residues 214–374 enclose the Helicase C-terminal domain; sequence NIQQFYLEVQ…RMDAPTLDEA (161 aa). Residues 428–533 are disordered; that stretch reads TTPIALTSEP…ERKHHSRPQA (106 aa). Positions 458 to 512 are enriched in basic and acidic residues; sequence DGNRNRSRDGRGGGDGRNRDRNRDGRNRDGNRDRNRDGNRDRNRDGGSRGRRGEG. Residues 524–533 are compositionally biased toward basic residues; sequence ERKHHSRPQA.

The protein belongs to the DEAD box helicase family. CshA subfamily. In terms of assembly, oligomerizes, may be a member of the RNA degradosome.

It is found in the cytoplasm. The catalysed reaction is ATP + H2O = ADP + phosphate + H(+). Functionally, DEAD-box RNA helicase possibly involved in RNA degradation. May work in conjunction with the cold shock proteins to ensure proper initiation of transcription at low and optimal temperatures. Unwinds dsRNA in both 5'- and 3'-directions and shows RNA-dependent ATPase activity. Probably has a somewhat redundant function with cshB, as cshA can partially complement the growth effects of a cshB deletion. Plays a role in adaptation to cold, oxididant and pH stress. The polypeptide is DEAD-box ATP-dependent RNA helicase CshA (Bacillus cereus (strain ATCC 14579 / DSM 31 / CCUG 7414 / JCM 2152 / NBRC 15305 / NCIMB 9373 / NCTC 2599 / NRRL B-3711)).